A 123-amino-acid chain; its full sequence is Small ribosomal subunit protein uS12cz/uS12cy (123 aa).

The protein belongs to the universal ribosomal protein uS12 family. As to quaternary structure, part of the 30S ribosomal subunit.

It is found in the plastid. It localises to the chloroplast. Its function is as follows. With S4 and S5 plays an important role in translational accuracy. Located at the interface of the 30S and 50S subunits. In Atropa belladonna (Belladonna), this protein is Small ribosomal subunit protein uS12cz/uS12cy (rps12-A).